A 519-amino-acid polypeptide reads, in one-letter code: uncharacterized protein (519 aa).

The span at 477–486 shows a compositional bias: basic residues; the sequence is IKRERAHVTQ. Residues 477–519 are disordered; it reads IKRERAHVTQRNKPPPSGGDTAVAEGFEPPDGVSRLSLSRRVH.

This is an uncharacterized protein from Mycobacterium tuberculosis (strain ATCC 25618 / H37Rv).